A 442-amino-acid polypeptide reads, in one-letter code: Elongation factor 1-alpha (442 aa).

Positions 6-229 (KPHMNLIVIG…ALDNLKPPSV (224 aa)) constitute a tr-type G domain. The tract at residues 15–22 (GHVDHGKS) is G1. Residue 15 to 22 (GHVDHGKS) coordinates GTP. Serine 22 serves as a coordination point for Mg(2+). Positions 71-75 (GVTID) are G2. The interval 92–95 (DAPG) is G3. Residues 92-96 (DAPGH) and 154-157 (NKMD) contribute to the GTP site. The G4 stretch occupies residues 154-157 (NKMD). Residues 195–197 (SAW) are G5.

Belongs to the TRAFAC class translation factor GTPase superfamily. Classic translation factor GTPase family. EF-Tu/EF-1A subfamily.

It localises to the cytoplasm. The catalysed reaction is GTP + H2O = GDP + phosphate + H(+). In terms of biological role, GTP hydrolase that promotes the GTP-dependent binding of aminoacyl-tRNA to the A-site of ribosomes during protein biosynthesis. The protein is Elongation factor 1-alpha of Ignicoccus hospitalis (strain KIN4/I / DSM 18386 / JCM 14125).